The chain runs to 248 residues: Probable aquaporin TIP2-2 (248 aa).

Transmembrane regions (helical) follow at residues 21-41 and 55-75; these read AYVA…GSAI and AGLV…VAIG. An NPA 1 motif is present at residues 84 to 86; it reads NPA. A run of 3 helical transmembrane segments spans residues 87–109, 133–153, and 168–188; these read VTFG…WIAQ, LSGV…FGLV, and LGTI…LVAG. An NPA 2 motif is present at residues 196–198; the sequence is NPA. A helical membrane pass occupies residues 210–230; sequence YTNIWIYWVGPLVGGGLAGLV.

This sequence belongs to the MIP/aquaporin (TC 1.A.8) family. TIP (TC 1.A.8.10) subfamily. As to expression, expressed in roots and leaves.

The protein localises to the vacuole membrane. Its function is as follows. Aquaporins facilitate the transport of water and small neutral solutes across cell membranes. May be involved in transport from the vacuolar compartment to the cytoplasm. The chain is Probable aquaporin TIP2-2 (TIP2-2) from Oryza sativa subsp. japonica (Rice).